The following is a 620-amino-acid chain: 1-deoxy-D-xylulose-5-phosphate synthase (620 aa).

Residues His-80 and 121–123 contribute to the thiamine diphosphate site; that span reads GHS. Asp-152 lines the Mg(2+) pocket. Residues 153 to 154, Asn-181, Tyr-288, and Glu-370 contribute to the thiamine diphosphate site; that span reads GA. Asn-181 contacts Mg(2+).

Belongs to the transketolase family. DXPS subfamily. In terms of assembly, homodimer. The cofactor is Mg(2+). Thiamine diphosphate is required as a cofactor.

It carries out the reaction D-glyceraldehyde 3-phosphate + pyruvate + H(+) = 1-deoxy-D-xylulose 5-phosphate + CO2. It functions in the pathway metabolic intermediate biosynthesis; 1-deoxy-D-xylulose 5-phosphate biosynthesis; 1-deoxy-D-xylulose 5-phosphate from D-glyceraldehyde 3-phosphate and pyruvate: step 1/1. Its function is as follows. Catalyzes the acyloin condensation reaction between C atoms 2 and 3 of pyruvate and glyceraldehyde 3-phosphate to yield 1-deoxy-D-xylulose-5-phosphate (DXP). This chain is 1-deoxy-D-xylulose-5-phosphate synthase, found in Salmonella arizonae (strain ATCC BAA-731 / CDC346-86 / RSK2980).